The primary structure comprises 350 residues: DNA polymerase IV (350 aa).

Residues 5-181 (IMHYDMDAFY…KKIKIIPGVG (177 aa)) form the UmuC domain. Mg(2+)-binding residues include Asp9 and Asp99. Glu100 is an active-site residue.

This sequence belongs to the DNA polymerase type-Y family. As to quaternary structure, monomer. Requires Mg(2+) as cofactor.

Its subcellular location is the cytoplasm. The enzyme catalyses DNA(n) + a 2'-deoxyribonucleoside 5'-triphosphate = DNA(n+1) + diphosphate. Functionally, poorly processive, error-prone DNA polymerase involved in untargeted mutagenesis. Copies undamaged DNA at stalled replication forks, which arise in vivo from mismatched or misaligned primer ends. These misaligned primers can be extended by PolIV. Exhibits no 3'-5' exonuclease (proofreading) activity. May be involved in translesional synthesis, in conjunction with the beta clamp from PolIII. The sequence is that of DNA polymerase IV from Fusobacterium nucleatum subsp. nucleatum (strain ATCC 25586 / DSM 15643 / BCRC 10681 / CIP 101130 / JCM 8532 / KCTC 2640 / LMG 13131 / VPI 4355).